A 271-amino-acid chain; its full sequence is Orotidine 5'-phosphate decarboxylase (271 aa).

Catalysis depends on Lys-95, which acts as the Proton donor.

The protein belongs to the OMP decarboxylase family. Type 2 subfamily.

It catalyses the reaction orotidine 5'-phosphate + H(+) = UMP + CO2. Its pathway is pyrimidine metabolism; UMP biosynthesis via de novo pathway; UMP from orotate: step 2/2. The chain is Orotidine 5'-phosphate decarboxylase from Aromatoleum aromaticum (strain DSM 19018 / LMG 30748 / EbN1) (Azoarcus sp. (strain EbN1)).